The chain runs to 376 residues: Heat stress transcription factor A-2a (376 aa).

The disordered stretch occupies residues 137-168; that stretch reads LKTIKRRRPPPSSPPSSSSSSSSSQHQQQPAA. Low complexity predominate over residues 151-160; that stretch reads PSSSSSSSSS. A coiled-coil region spans residues 182–229; sequence VNRLQRDKSVLIAEVVKLRQEQQTTRAQMQAMEERISAAEQKQQQMTV. The interval 185–235 is hydrophobic repeat HR-A/B; the sequence is LQRDKSVLIAEVVKLRQEQQTTRAQMQAMEERISAAEQKQQQMTVFLARAM. Residues 265-269 carry the Nuclear localization signal motif; that stretch reads KKRRR. Disordered stretches follow at residues 296-319 and 332-362; these read VAEP…DTES and KQRE…DDDD. Residues 307–316 show a composition bias toward gly residues; the sequence is GDGGGGGGGD. Residues 318-325 carry the AHA motif; that stretch reads ESFWMQLL. Over residues 352–362 the composition is skewed to acidic residues; sequence VDNDEEDDDDD. The Nuclear export signal motif lies at 366–373; that stretch reads LVQSIYHL.

This sequence belongs to the HSF family. Class A subfamily. In terms of assembly, homotrimer. Exhibits temperature-dependent phosphorylation.

The protein localises to the cytoplasm. It is found in the nucleus. Transcriptional regulator that specifically binds DNA of heat shock promoter elements (HSE). This chain is Heat stress transcription factor A-2a (HSFA2A), found in Oryza sativa subsp. japonica (Rice).